Reading from the N-terminus, the 247-residue chain is Carboxy-S-adenosyl-L-methionine synthase (247 aa).

S-adenosyl-L-methionine is bound by residues Y39, 64 to 66, 89 to 90, 117 to 118, N132, and R199; these read GCS, DN, and DI.

It belongs to the class I-like SAM-binding methyltransferase superfamily. Cx-SAM synthase family. In terms of assembly, homodimer.

The catalysed reaction is prephenate + S-adenosyl-L-methionine = carboxy-S-adenosyl-L-methionine + 3-phenylpyruvate + H2O. Its function is as follows. Catalyzes the conversion of S-adenosyl-L-methionine (SAM) to carboxy-S-adenosyl-L-methionine (Cx-SAM). This is Carboxy-S-adenosyl-L-methionine synthase from Klebsiella pneumoniae (strain 342).